We begin with the raw amino-acid sequence, 170 residues long: UPF0220 protein C8D2.02c (170 aa).

Transmembrane regions (helical) follow at residues 23 to 43 (LGVY…VDAA), 54 to 74 (LHIT…IVIV), 101 to 121 (ILFI…TVFI), and 136 to 156 (MGSA…ALWI).

It belongs to the UPF0220 family.

Its subcellular location is the membrane. The protein is UPF0220 protein C8D2.02c of Schizosaccharomyces pombe (strain 972 / ATCC 24843) (Fission yeast).